The sequence spans 223 residues: Small ribosomal subunit protein uS3 (223 aa).

A KH type-2 domain is found at leucine 38–histidine 106.

The protein belongs to the universal ribosomal protein uS3 family. In terms of assembly, part of the 30S ribosomal subunit. Forms a tight complex with proteins S10 and S14.

Its function is as follows. Binds the lower part of the 30S subunit head. Binds mRNA in the 70S ribosome, positioning it for translation. This is Small ribosomal subunit protein uS3 from Koribacter versatilis (strain Ellin345).